The primary structure comprises 218 residues: MRIILLGAPGAGKGTQASYICKTLNIPQISTGDMLRAAVQAQTPVGIEAKKVMDAGKLVSDEIILALVKERLASQDCINGCLFDGFPRTIAQAESLKNDSILLDYVMEIHVDDKEIIERMSGRRVHLSSGRTYHVRFNPPKKEGLDDLTGEPLVQREDDQEETVKKRLQIYHDQTAPLLQYYHDWSLTGSPDAPRYSSIKGTGSVEEIRQRILDALNS.

10–15 (GAGKGT) provides a ligand contact to ATP. Positions 30–59 (STGDMLRAAVQAQTPVGIEAKKVMDAGKLV) are NMP. Residues Thr31, Arg36, 57–59 (KLV), 85–88 (GFPR), and Gln92 contribute to the AMP site. The interval 122 to 159 (GRRVHLSSGRTYHVRFNPPKKEGLDDLTGEPLVQREDD) is LID. ATP is bound by residues Arg123 and 132 to 133 (TY). Positions 156 and 167 each coordinate AMP. Position 203 (Gly203) interacts with ATP.

The protein belongs to the adenylate kinase family. In terms of assembly, monomer.

The protein localises to the cytoplasm. It catalyses the reaction AMP + ATP = 2 ADP. Its pathway is purine metabolism; AMP biosynthesis via salvage pathway; AMP from ADP: step 1/1. Its function is as follows. Catalyzes the reversible transfer of the terminal phosphate group between ATP and AMP. Plays an important role in cellular energy homeostasis and in adenine nucleotide metabolism. In Chlorobium phaeobacteroides (strain DSM 266 / SMG 266 / 2430), this protein is Adenylate kinase.